A 144-amino-acid polypeptide reads, in one-letter code: Transcriptional regulator MraZ (144 aa).

SpoVT-AbrB domains follow at residues 5–47 (TYTP…PRAE) and 77–120 (TDEQ…DAQA).

The protein belongs to the MraZ family. In terms of assembly, forms oligomers.

It localises to the cytoplasm. It is found in the nucleoid. The protein is Transcriptional regulator MraZ of Mycolicibacterium vanbaalenii (strain DSM 7251 / JCM 13017 / BCRC 16820 / KCTC 9966 / NRRL B-24157 / PYR-1) (Mycobacterium vanbaalenii).